Consider the following 746-residue polypeptide: Actin filament-associated protein 1-like 1 (746 aa).

The segment at 88-206 is disordered; it reads EDQKKEPEAN…RLTHQWPSEE (119 aa). The span at 98–107 shows a compositional bias: polar residues; the sequence is HTVTKPSKTD. Residues 108-119 show a composition bias toward pro residues; the sequence is SPPPLPNTPPPE. A compositionally biased stretch (low complexity) spans 139–148; sequence SRSSSSPPNS. One can recognise a PH 1 domain in the interval 214 to 310; it reads DCHICAFLLR…WLHVVRDVTG (97 aa). The tract at residues 336-371 is disordered; that stretch reads EKQTSDSDSMPSGESARDIRENGKPKRGALSELTGT. The segment covering 350 to 359 has biased composition (basic and acidic residues); the sequence is SARDIRENGK. Positions 406–497 constitute a PH 2 domain; the sequence is RCGYVGVLVN…WLGVLLAETG (92 aa). Disordered regions lie at residues 539 to 596 and 723 to 746; these read EVPF…TRAQ and PSIY…KKGT. Over residues 562 to 575 the composition is skewed to polar residues; that stretch reads SFSSSDTGKPSPQI. A coiled-coil region spans residues 591 to 682; that stretch reads GKTRAQEDAR…VKENLKKSLA (92 aa). Basic and acidic residues predominate over residues 736 to 746; that stretch reads KAKEWESKKGT.

It is found in the cytoplasm. It localises to the cell projection. The protein localises to the podosome. Its subcellular location is the invadopodium. The protein resides in the cytoskeleton. It is found in the stress fiber. Functionally, may be involved in podosome and invadosome formation. The polypeptide is Actin filament-associated protein 1-like 1 (afap1l1) (Danio rerio (Zebrafish)).